Here is a 65-residue protein sequence, read N- to C-terminus: Large ribosomal subunit protein bL35 (65 aa).

A disordered region spans residues 1 to 23 (MPKIKTNRGAAKRFKKTGTGKVK). Basic residues predominate over residues 10 to 23 (AAKRFKKTGTGKVK).

Belongs to the bacterial ribosomal protein bL35 family.

The sequence is that of Large ribosomal subunit protein bL35 from Trichlorobacter lovleyi (strain ATCC BAA-1151 / DSM 17278 / SZ) (Geobacter lovleyi).